A 194-amino-acid chain; its full sequence is Fe/S biogenesis protein NfuA (194 aa).

Positions 151 and 154 each coordinate [4Fe-4S] cluster.

It belongs to the NfuA family. In terms of assembly, homodimer. It depends on [4Fe-4S] cluster as a cofactor.

In terms of biological role, involved in iron-sulfur cluster biogenesis. Binds a 4Fe-4S cluster, can transfer this cluster to apoproteins, and thereby intervenes in the maturation of Fe/S proteins. Could also act as a scaffold/chaperone for damaged Fe/S proteins. This chain is Fe/S biogenesis protein NfuA, found in Actinobacillus succinogenes (strain ATCC 55618 / DSM 22257 / CCUG 43843 / 130Z).